The following is a 100-amino-acid chain: uncharacterized protein (100 aa).

This is an uncharacterized protein from Acheta domesticus (House cricket).